Consider the following 192-residue polypeptide: Ribosomal RNA small subunit methyltransferase G (192 aa).

Residues Gly-63, Leu-68, 112-113 (IE), and Arg-125 each bind S-adenosyl-L-methionine.

The protein belongs to the methyltransferase superfamily. RNA methyltransferase RsmG family.

Its subcellular location is the cytoplasm. It catalyses the reaction guanosine(527) in 16S rRNA + S-adenosyl-L-methionine = N(7)-methylguanosine(527) in 16S rRNA + S-adenosyl-L-homocysteine. Its function is as follows. Specifically methylates the N7 position of guanine in position 527 of 16S rRNA. The chain is Ribosomal RNA small subunit methyltransferase G from Rickettsia africae (strain ESF-5).